The following is a 409-amino-acid chain: MARAKFERTKPHVNVGTIGHVDHGKTTLTAAITTTLAALGQATAKRYDEIDAAPEEKARGITINTAHVEYQTANRHYAHVDCPGHADYVKNMITGAAQMDGAILVVSAADGPMPQTREHILLARQVGVPSLVVFLNKADMVDDPELLELVELEVRELLSKYDFPGDDVPIIRGSALKALERMTANPKTQRGEDPWVDKIYELMDAVDSYIPTPERDVDKPFLMAVEDVFSITGRGTVATGRIERGRIKVGETVELVGLRETRSTTVTGLEMFQKTLDEGIAGDNVGVLLRGIQKNEVERGMVLAKPKTITPHTNFESEVYVLKKEEGGRHTPFFAGYRPQFYVRTTDVTGTISSFTADDGSQPEMVMPGDRVKMTVELIQPIAIEQGMRFAIREGGRTVGAGVVSKILK.

One can recognise a tr-type G domain in the interval lysine 10–glutamate 214. The tract at residues glycine 19–threonine 26 is G1. A GTP-binding site is contributed by glycine 19 to threonine 26. Residue threonine 26 coordinates Mg(2+). The interval glycine 60–asparagine 64 is G2. A G3 region spans residues aspartate 81–glycine 84. GTP contacts are provided by residues aspartate 81–histidine 85 and asparagine 136–aspartate 139. The tract at residues asparagine 136 to aspartate 139 is G4. Residues serine 174–leucine 176 form a G5 region.

The protein belongs to the TRAFAC class translation factor GTPase superfamily. Classic translation factor GTPase family. EF-Tu/EF-1A subfamily. In terms of assembly, monomer.

It is found in the cytoplasm. The catalysed reaction is GTP + H2O = GDP + phosphate + H(+). Its function is as follows. GTP hydrolase that promotes the GTP-dependent binding of aminoacyl-tRNA to the A-site of ribosomes during protein biosynthesis. The polypeptide is Elongation factor Tu (Synechococcus sp. (strain JA-2-3B'a(2-13)) (Cyanobacteria bacterium Yellowstone B-Prime)).